Here is a 309-residue protein sequence, read N- to C-terminus: 2-dehydro-3-deoxygluconokinase (309 aa).

Residues 34-38, tyrosine 89, 103-105, and arginine 167 contribute to the substrate site; these read GAEVN and YYR. ATP is bound by residues 165-167, serine 193, 219-225, 248-251, and asparagine 275; these read NYR, KRGAKGA, and GAGD. Aspartate 251 is a binding site for substrate. The active-site Proton acceptor is aspartate 251. Position 287 (aspartate 287) interacts with substrate.

The protein belongs to the carbohydrate kinase pfkB family. In terms of assembly, homohexamer; trimer of dimers.

It carries out the reaction 2-dehydro-3-deoxy-D-gluconate + ATP = 2-dehydro-3-deoxy-6-phospho-D-gluconate + ADP + H(+). It participates in carbohydrate acid metabolism; 2-dehydro-3-deoxy-D-gluconate degradation; D-glyceraldehyde 3-phosphate and pyruvate from 2-dehydro-3-deoxy-D-gluconate: step 1/2. Its function is as follows. Involved in the degradation of glucose via the semi-phosphorylative Entner-Doudoroff pathway. Catalyzes the phosphorylation of 2-keto-3-deoxygluconate (KDG) to produce 2-keto-3-deoxy-6-phosphogluconate (KDPG). This chain is 2-dehydro-3-deoxygluconokinase (kdgK), found in Thermus thermophilus (strain ATCC 27634 / DSM 579 / HB8).